Here is a 539-residue protein sequence, read N- to C-terminus: Protein pim1 (539 aa).

The interval methionine 1–valine 53 is disordered. Residues threonine 11–lysine 33 are compositionally biased toward basic and acidic residues. Residues asparagine 34–lysine 43 show a composition bias toward basic residues. 7 RCC1 repeats span residues arginine 70–histidine 125, glycine 127–aspartate 191, asparagine 192–threonine 243, threonine 244–asparagine 296, glycine 298–glutamate 353, aspartate 354–serine 417, and glycine 419–isoleucine 472. The segment at glutamate 478–alanine 539 is disordered. Basic and acidic residues predominate over residues serine 486 to aspartate 504. Residues valine 514–serine 525 are compositionally biased toward polar residues.

In terms of assembly, oligomer of dis3, pim1 and spi1. Interacts with ned1.

It localises to the nucleus. Functionally, promotes the exchange of Ran(spi1)-bound GDP by GTP. Involved in the control of mitosis. Regulates a variety of nuclear events, including mitotic check-point, chromosome decondensation and mRNA processing/transport. This chain is Protein pim1 (pim1), found in Schizosaccharomyces pombe (strain 972 / ATCC 24843) (Fission yeast).